A 308-amino-acid chain; its full sequence is Acetyl-coenzyme A carboxylase carboxyl transferase subunit alpha (308 aa).

The CoA carboxyltransferase C-terminal domain maps to 36 to 286 (ELEKEVSSVY…ESYFLKAFEE (251 aa)).

This sequence belongs to the AccA family. Acetyl-CoA carboxylase is a heterohexamer composed of biotin carboxyl carrier protein (AccB), biotin carboxylase (AccC) and two subunits each of ACCase subunit alpha (AccA) and ACCase subunit beta (AccD).

It localises to the cytoplasm. It catalyses the reaction N(6)-carboxybiotinyl-L-lysyl-[protein] + acetyl-CoA = N(6)-biotinyl-L-lysyl-[protein] + malonyl-CoA. Its pathway is lipid metabolism; malonyl-CoA biosynthesis; malonyl-CoA from acetyl-CoA: step 1/1. In terms of biological role, component of the acetyl coenzyme A carboxylase (ACC) complex. First, biotin carboxylase catalyzes the carboxylation of biotin on its carrier protein (BCCP) and then the CO(2) group is transferred by the carboxyltransferase to acetyl-CoA to form malonyl-CoA. The chain is Acetyl-coenzyme A carboxylase carboxyl transferase subunit alpha from Helicobacter hepaticus (strain ATCC 51449 / 3B1).